A 759-amino-acid chain; its full sequence is DNA topoisomerase 4 subunit A (759 aa).

The 473-residue stretch at 44-516 (LPDVRDGLKP…VFGEAPQVDA (473 aa)) folds into the Topo IIA-type catalytic domain. Tyr132 functions as the O-(5'-phospho-DNA)-tyrosine intermediate in the catalytic mechanism.

This sequence belongs to the type II topoisomerase GyrA/ParC subunit family. ParC type 1 subfamily. In terms of assembly, heterotetramer composed of ParC and ParE.

Its subcellular location is the cell membrane. It carries out the reaction ATP-dependent breakage, passage and rejoining of double-stranded DNA.. Its function is as follows. Topoisomerase IV is essential for chromosome segregation. It relaxes supercoiled DNA. Performs the decatenation events required during the replication of a circular DNA molecule. The protein is DNA topoisomerase 4 subunit A of Caulobacter vibrioides (strain ATCC 19089 / CIP 103742 / CB 15) (Caulobacter crescentus).